An 85-amino-acid chain; its full sequence is RDS3 complex subunit 10 (85 aa).

Belongs to the SF3b complex composed of CUS1, HSH49, HSH155, RCP1, RDS3 and RSE1.

Its subcellular location is the nucleus. Involved in pre-mRNA splicing. Required for the SF3b integrity and prespliceosome assembly. This Saccharomyces cerevisiae (strain ATCC 204508 / S288c) (Baker's yeast) protein is RDS3 complex subunit 10 (YSF3).